The primary structure comprises 558 residues: Kelch-like protein 23 (558 aa).

The region spanning 36-104 (TDITLQCPSG…AYTSQIEITE (69 aa)) is the BTB domain. The region spanning 139–240 (CIGMHSFAEF…DPVYLKTALG (102 aa)) is the BACK domain. 6 Kelch repeats span residues 274-320 (TMYI…CLGP), 321-369 (NIYV…TLGG), 370-416 (CVYA…VLHD), 418-466 (IYVI…PLEN), 467-508 (KLYL…IMNG), and 510-557 (IYVT…CVYN).

This Pongo abelii (Sumatran orangutan) protein is Kelch-like protein 23 (KLHL23).